The chain runs to 211 residues: Prolactin-1 (211 aa).

An N-terminal signal peptide occupies residues 1-23 (MARRSQGTKLHLAVLCLVVSCHA). 2 cysteine pairs are disulfide-bonded: cysteine 69–cysteine 184 and cysteine 201–cysteine 211.

It belongs to the somatotropin/prolactin family.

Its subcellular location is the secreted. The polypeptide is Prolactin-1 (prl1) (Oncorhynchus keta (Chum salmon)).